Here is a 288-residue protein sequence, read N- to C-terminus: Homeobox protein Hox-B4a (288 aa).

Residues 10–136 are disordered; it reads SNYVDPKFPP…ASSPASTRKD (127 aa). Residues 118 to 132 show a composition bias toward polar residues; it reads CGQTPHSQGASSPAS. Positions 139–144 match the Antp-type hexapeptide motif; the sequence is VYPWMK. Residues 160 to 219 constitute a DNA-binding region (homeobox); sequence PKRSRTAYTRQQVLELEKEFHYNRYLTRRRRVEIAHTLCLSERQIKIWFQNRRMKWKKDH.

It belongs to the Antp homeobox family. Deformed subfamily.

It localises to the nucleus. In terms of biological role, sequence-specific transcription factor which is part of a developmental regulatory system that provides cells with specific positional identities on the anterior-posterior axis. The sequence is that of Homeobox protein Hox-B4a (hoxb4a) from Takifugu rubripes (Japanese pufferfish).